The primary structure comprises 433 residues: MQKLMDYFFKRKLKVPRPISNDISVRVKNLYAVYDEKQENQLVALNNISYDFKKNKIYFIIGNSGSGKSTLVTHFNGLMISRYGFVQVGDIVSGDHFDFERQLLGVIDSYDKKIINLLWRNQLDQWTFLVLFSNEVNIQQARILFEANFKQKPISLKFIKTKNNHELITNPYVRENTKIAVVRVDKNVILEINDKMNYEELQRFEFIKKEIKTNYHLSKKIKRFKELRRRVGFVFQFPEYQLFKDTIEKDIMFGPVNLGVKKSEAKKRAKFYLNKLGLGDDYLERSPFGLSGGQKRRVAIAGILAIQNDILVFDEPTAGLDPAGEHEMMQIILDAKANNKTVFVITHTMEHVLEVADEVIVMDEGEIIKTGTPYEIFFDQHIINSTSIQVPRVIAVINELIKKDLKYEILKQKQPRTIEELADAIIEFKKGEK.

Residues 25 to 389 (VRVKNLYAVY…QHIINSTSIQ (365 aa)) enclose the ABC transporter domain. Position 62-69 (62-69 (GNSGSGKS)) interacts with ATP.

This sequence belongs to the ABC transporter superfamily. Energy-coupling factor EcfA family. Forms a stable energy-coupling factor (ECF) transporter complex composed of 2 membrane-embedded substrate-binding proteins (S component), 2 ATP-binding proteins (A component) and 2 transmembrane proteins (T component).

It localises to the cell membrane. Functionally, ATP-binding (A) component of a common energy-coupling factor (ECF) ABC-transporter complex. Unlike classic ABC transporters this ECF transporter provides the energy necessary to transport a number of different substrates. The chain is Energy-coupling factor transporter ATP-binding protein EcfA2 from Ureaplasma parvum serovar 3 (strain ATCC 700970).